The chain runs to 523 residues: Maintenance of mitochondrial morphology protein 1 (523 aa).

Residues 1 to 43 are Lumenal-facing; it reads MAGSTSASLQTPYFPSSTQINPVRVDHTLPLPPSQPSLSFTQG. Residues 44-64 form a helical membrane-spanning segment; the sequence is LLVGQLSVVLLIGAFIKFFIF. Residues 65-523 lie on the Cytoplasmic side of the membrane; the sequence is GEAPPPPSRG…GSMPDTVTET (459 aa). 5 disordered regions span residues 70–118, 128–147, 295–349, 420–474, and 492–523; these read PPSR…SSST, YYSATPTHPTPKHGRPRLYH, TSDQ…SKHG, RTGL…DRGL, and GGHQNQSGRDGGRGGNEQFAMPGSMPDTVTET. 2 stretches are compositionally biased toward polar residues: residues 74–96 and 105–118; these read GLSNRTSTHPRSYSINAASTDSS and STSNILRPVPSSST. The segment covering 137 to 147 has biased composition (basic residues); it reads TPKHGRPRLYH. Residues 151–412 enclose the SMP-LTD domain; it reads QPESLDWFNV…EPRVQVVGLP (262 aa). The span at 295–312 shows a compositional bias: polar residues; it reads TSDQTMSPIPTPHDTTSE. Over residues 449-468 the composition is skewed to gly residues; that stretch reads GVSGGGGSGGGSGGGGGGMR.

This sequence belongs to the MMM1 family. As to quaternary structure, homodimer. Component of the ER-mitochondria encounter structure (ERMES) or MDM complex, composed of MMM1, MDM10, MDM12 and MDM34. An MMM1 homodimer associates with one molecule of MDM12 on each side in a pairwise head-to-tail manner, and the SMP-LTD domains of MMM1 and MDM12 generate a continuous hydrophobic tunnel for phospholipid trafficking.

It localises to the endoplasmic reticulum membrane. Functionally, component of the ERMES/MDM complex, which serves as a molecular tether to connect the endoplasmic reticulum (ER) and mitochondria. Components of this complex are involved in the control of mitochondrial shape and protein biogenesis, and function in nonvesicular lipid trafficking between the ER and mitochondria. The MDM12-MMM1 subcomplex functions in the major beta-barrel assembly pathway that is responsible for biogenesis of all outer membrane beta-barrel proteins, and acts in a late step after the SAM complex. The MDM10-MDM12-MMM1 subcomplex further acts in the TOM40-specific pathway after the action of the MDM12-MMM1 complex. Essential for establishing and maintaining the structure of mitochondria and maintenance of mtDNA nucleoids. In Paracoccidioides lutzii (strain ATCC MYA-826 / Pb01) (Paracoccidioides brasiliensis), this protein is Maintenance of mitochondrial morphology protein 1.